The following is a 342-amino-acid chain: Heat-inducible transcription repressor HrcA (342 aa).

The protein belongs to the HrcA family.

Its function is as follows. Negative regulator of class I heat shock genes (grpE-dnaK-dnaJ and groELS operons). Prevents heat-shock induction of these operons. The protein is Heat-inducible transcription repressor HrcA of Oceanobacillus iheyensis (strain DSM 14371 / CIP 107618 / JCM 11309 / KCTC 3954 / HTE831).